The sequence spans 105 residues: Large ribosomal subunit protein uL24 (105 aa).

Belongs to the universal ribosomal protein uL24 family. Part of the 50S ribosomal subunit.

Functionally, one of two assembly initiator proteins, it binds directly to the 5'-end of the 23S rRNA, where it nucleates assembly of the 50S subunit. In terms of biological role, one of the proteins that surrounds the polypeptide exit tunnel on the outside of the subunit. This is Large ribosomal subunit protein uL24 from Marinomonas sp. (strain MWYL1).